The following is a 218-amino-acid chain: ATP phosphoribosyltransferase (218 aa).

This sequence belongs to the ATP phosphoribosyltransferase family. Short subfamily. In terms of assembly, heteromultimer composed of HisG and HisZ subunits.

The protein resides in the cytoplasm. The enzyme catalyses 1-(5-phospho-beta-D-ribosyl)-ATP + diphosphate = 5-phospho-alpha-D-ribose 1-diphosphate + ATP. The protein operates within amino-acid biosynthesis; L-histidine biosynthesis; L-histidine from 5-phospho-alpha-D-ribose 1-diphosphate: step 1/9. Functionally, catalyzes the condensation of ATP and 5-phosphoribose 1-diphosphate to form N'-(5'-phosphoribosyl)-ATP (PR-ATP). Has a crucial role in the pathway because the rate of histidine biosynthesis seems to be controlled primarily by regulation of HisG enzymatic activity. In Deinococcus radiodurans (strain ATCC 13939 / DSM 20539 / JCM 16871 / CCUG 27074 / LMG 4051 / NBRC 15346 / NCIMB 9279 / VKM B-1422 / R1), this protein is ATP phosphoribosyltransferase (hisG).